Reading from the N-terminus, the 478-residue chain is ATP-dependent RNA helicase DDX19A (478 aa).

Ala2 bears the N-acetylalanine mark. Positions 2–299 are N-terminal lobe; the sequence is ATDSWALAVD…DPNIIKLKRE (298 aa). Lys26 is covalently cross-linked (Glycyl lysine isopeptide (Lys-Gly) (interchain with G-Cter in SUMO1); alternate). Lys26 is covalently cross-linked (Glycyl lysine isopeptide (Lys-Gly) (interchain with G-Cter in SUMO2); alternate). The disordered stretch occupies residues 31–55; it reads KPDTNGVIKTNATPEKTDEEEKEDR. The interval 54 to 67 is N-terminal helix; that stretch reads DRAAQSLLNKLIRS. The Q motif motif lies at 91–119; the sequence is KSFEELRLKPQLLQGVYAMGFNRPSKIQE. Residues Gln118 and 137 to 144 each bind ATP; that span reads SQSGTGKT. Residues 124–294 form the Helicase ATP-binding domain; that stretch reads MMLAEPPQNL…QKVVPDPNII (171 aa). Residues 241–244 carry the DEAD box motif; it reads DEAD. The C-terminal lobe stretch occupies residues 300–478; it reads EETLDTIKQY…DLDEIEKIAN (179 aa). The region spanning 305–473 is the Helicase C-terminal domain; it reads TIKQYYVLCN…RLDTDDLDEI (169 aa). ATP is bound by residues Arg428 and Arg431.

The protein belongs to the DEAD box helicase family. DDX19/DBP5 subfamily.

The protein localises to the cytoplasm. It is found in the nucleus. The protein resides in the nucleoplasm. The catalysed reaction is ATP + H2O = ADP + phosphate + H(+). Functionally, ATP-dependent RNA helicase involved in mRNA export from the nucleus. Rather than unwinding RNA duplexes, DDX19 functions as a remodeler of ribonucleoprotein particles, whereby proteins bound to nuclear mRNA are dissociated and replaced by cytoplasmic mRNA binding proteins. The chain is ATP-dependent RNA helicase DDX19A (DDX19A) from Bos taurus (Bovine).